We begin with the raw amino-acid sequence, 174 residues long: Ferredoxin-thioredoxin reductase, variable chain, chloroplastic (174 aa).

A chloroplast-targeting transit peptide spans 1–62 (MTTGVAVMSS…RTRARLAICC (62 aa)). Over residues 69–81 (DSSTGFDSSSSSP) the composition is skewed to low complexity. Residues 69–89 (DSSTGFDSSSSSPPEEDEELK) are disordered. Phosphoserine is present on residues Ser70 and Ser71.

Belongs to the ferredoxin thioredoxin reductase alpha subunit family. In terms of assembly, heterodimer of subunit A (variable subunit) and subunit B (catalytic subunit). Heterodimeric FTR forms a complex with ferredoxin and thioredoxin.

Its subcellular location is the plastid. The protein resides in the chloroplast. In terms of biological role, variable subunit of the ferredoxin-thioredoxin reductase (FTR), which catalyzes the two-electron reduction of thioredoxins by the electrons provided by reduced ferredoxin. The chain is Ferredoxin-thioredoxin reductase, variable chain, chloroplastic (FTRV) from Spinacia oleracea (Spinach).